The primary structure comprises 358 residues: Chitin synthase export chaperone (358 aa).

7 helical membrane passes run 49-69 (IIFQ…TVVM), 88-108 (FFYL…GVIP), 117-137 (FVAV…INGF), 159-179 (FVAF…WAGL), 185-205 (VGIF…YVVM), 220-240 (LGDI…LYAF), and 250-270 (HYLD…MMVY). The interval 321–358 (ASGPGTGSGASASGYEGGHHRRESHGYTPSPNRQSLRY) is disordered. Residues 347 to 358 (YTPSPNRQSLRY) are compositionally biased toward polar residues.

It belongs to the CHS7 family. Interacts with chs-3.

Its subcellular location is the endoplasmic reticulum membrane. Chaperone required for the export of the chitin synthase chs-3 from the endoplasmic reticulum. The chain is Chitin synthase export chaperone (csc-1) from Neurospora crassa (strain ATCC 24698 / 74-OR23-1A / CBS 708.71 / DSM 1257 / FGSC 987).